The primary structure comprises 137 residues: NADH dehydrogenase [ubiquinone] 1 beta subcomplex subunit 7 (137 aa).

Gly2 carries N-myristoyl glycine lipidation. Positions 56–98 (RDYCAHHLIRLLKCKRDSFPNFLACKQERHDWDYCEHRDYVMR) constitute a CHCH domain. Positions 59–69 (CAHHLIRLLKC) match the Cx9C motif 1 motif. Intrachain disulfides connect Cys59/Cys90 and Cys69/Cys80. At Ser73 the chain carries Phosphoserine. The short motif at 80–90 (CKQERHDWDYC) is the Cx9C motif 2 element. Residues 113 to 137 (KRREKKAAELAKGQGPGEVDPKVAL) form a disordered region.

This sequence belongs to the complex I NDUFB7 subunit family. As to quaternary structure, complex I is composed of 45 different subunits.

Its subcellular location is the mitochondrion inner membrane. The protein resides in the mitochondrion intermembrane space. Accessory subunit of the mitochondrial membrane respiratory chain NADH dehydrogenase (Complex I), that is believed not to be involved in catalysis. Complex I functions in the transfer of electrons from NADH to the respiratory chain. The immediate electron acceptor for the enzyme is believed to be ubiquinone. The protein is NADH dehydrogenase [ubiquinone] 1 beta subcomplex subunit 7 (NDUFB7) of Homo sapiens (Human).